The chain runs to 353 residues: DNA integrity scanning protein DisA (353 aa).

The region spanning 6 to 144 (DKELMNILKI…GGIKYVLRDS (139 aa)) is the DAC domain. ATP-binding positions include G73, L91, and 104–108 (TRHRT).

It belongs to the DisA family. As to quaternary structure, homooctamer. Mg(2+) serves as cofactor.

The enzyme catalyses 2 ATP = 3',3'-c-di-AMP + 2 diphosphate. Participates in a DNA-damage check-point that is active prior to asymmetric division when DNA is damaged. DisA forms globular foci that rapidly scan along the chromosomes during sporulation, searching for lesions. When a lesion is present, DisA pauses at the lesion site. This triggers a cellular response that culminates in a temporary block in sporulation initiation. In terms of biological role, also has diadenylate cyclase activity, catalyzing the condensation of 2 ATP molecules into cyclic di-AMP (c-di-AMP). c-di-AMP acts as a signaling molecule that couples DNA integrity with progression of sporulation. The rise in c-di-AMP level generated by DisA while scanning the chromosome, operates as a positive signal that advances sporulation; upon encountering a lesion, the DisA focus arrests at the damaged site and halts c-di-AMP synthesis. The sequence is that of DNA integrity scanning protein DisA from Clostridium botulinum (strain Okra / Type B1).